A 386-amino-acid chain; its full sequence is MASHSSTLLSSPTFAPFSSHRLHYSPNPSTLRFSRPIRNKPNLALRCSVSIEKEVPETERPFTFLRDSDDVTPSSSSSSVRARFETMIRAAQDSVCDAIEAIEGGPKFKEDVWSRPGGGGGISRVLQDGNVFEKAGVNVSVVYGVMPPEAYRAAKGSASDQKPGPVPFFAAGVSSVLHPKNPFAPTLHFNYRYFETDAPKDVPGAPRQWWFGGGTDFTPAYIFEEDVKHFHSIQKQACDKFDPSFYPRFKKWCDDYFYIKHRDERRGLGGIFFDDLNDYDQEMLLSFATECANSVVPAYIPIVEKRKDMEFTEQHKAWQQLRRGRYVEFNLVYDRGTTFGLKTGGRIESILVSLPLSARWEYDHKPEEGTEEWKLLDACINPKEWI.

Residues 1 to 48 (MASHSSTLLSSPTFAPFSSHRLHYSPNPSTLRFSRPIRNKPNLALRCS) constitute a chloroplast transit peptide. Residues 125–134 (VLQDGNVFEK) form an important for dimerization region. Ser-174 serves as a coordination point for substrate. Catalysis depends on His-188, which acts as the Proton donor. Substrate-binding positions include 190–192 (NYR) and 344–349 (GGRIES). The interval 326–361 (YVEFNLVYDRGTTFGLKTGGRIESILVSLPLSARWE) is important for dimerization.

The protein belongs to the aerobic coproporphyrinogen-III oxidase family. As to quaternary structure, homodimer. Expressed in cotyledons, leaves and roots.

The protein localises to the plastid. It is found in the chloroplast. The catalysed reaction is coproporphyrinogen III + O2 + 2 H(+) = protoporphyrinogen IX + 2 CO2 + 2 H2O. Its pathway is porphyrin-containing compound metabolism; protoporphyrin-IX biosynthesis; protoporphyrinogen-IX from coproporphyrinogen-III (O2 route): step 1/1. It participates in porphyrin-containing compound metabolism; chlorophyll biosynthesis. In terms of biological role, key enzyme in heme biosynthesis. Catalyzes the oxidative decarboxylation of propionic acid side chains of rings A and B of coproporphyrinogen III. The chain is Coproporphyrinogen-III oxidase 1, chloroplastic (CPX1) from Arabidopsis thaliana (Mouse-ear cress).